We begin with the raw amino-acid sequence, 506 residues long: CDK5 regulatory subunit-associated protein 3 (506 aa).

3 short sequence motifs (shuffled ATG8-binding motif) span residues 267 to 270, 292 to 295, and 310 to 313; these read IDWG. Positions 269 to 506 are required for interaction with UFL1 and mediates interaction with CHEK1; it reads WGDFGVEAVS…RPVNLMGTSL (238 aa). An RPL10a-binding domain (RBD) region spans residues 355 to 370; the sequence is DELMELEIFLAQRAVE. Residue K450 forms a Glycyl lysine isopeptide (Lys-Gly) (interchain with G-Cter in SUMO2) linkage.

Belongs to the CDK5RAP3 family. As to quaternary structure, substrate adapter component of the UFM1 ribosome E3 ligase (UREL) complex, composed of UFL1, DDRGK1 and CDK5RAP3. Interaction with UFL1 anchors CDK5RAP3 in the cytoplasm, preventing its translocation to the nucleus which allows expression of the CCND1 cyclin and progression of cells through the G1/S transition. Interacts with ATG8 family proteins MAP1LC3A, MAP1LC3B, GABARAP, GABARAPL1 and GABARAPL2. Interacts with CDK5R1; competes with CDK5RAP1 and CDK5RAP2. Interacts with RELA. Interacts with CHEK1; may negatively regulate CHEK1 and thereby stimulate entry into mitosis. Interacts with CDKN2A/ARF and MDM2; forms a ternary complex involved in regulation of p53/TP53. Interacts with MAPK14. Interacts with CCNB1. Interacts with TUBG1; may regulate CDK5RAP3 in mitotic G2/M transition checkpoint. (Microbial infection) Interacts with hepatitis B virus large envelope protein mutant pre-s2; promotes mitotic entry. Post-translationally, may be phosphorylated by CDK5. Ubiquitinated. Probably triggers proteasomal degradation and is negatively regulated by UFL1. In terms of processing, may be ufmylated. Post-translationally, cleaved by caspases early during apoptosis, the resulting peptides may play a role in rupture of the nuclear envelope. As to expression, ubiquitously expressed. Expressed in heart, brain, placenta, lung, liver, skeletal muscle, kidney and pancreas. Isoform 3 is expressed in kidney, liver, skeletal muscle and placenta.

The protein resides in the endoplasmic reticulum membrane. The protein localises to the cytoplasm. Its subcellular location is the nucleus. It is found in the cytoskeleton. It localises to the microtubule organizing center. The protein resides in the centrosome. Functionally, substrate adapter of E3 ligase complexes mediating ufmylation, the covalent attachment of the ubiquitin-like modifier UFM1 to substrate proteins, and which is involved in various processes, such as ribosome recycling and reticulophagy (also called ER-phagy). As part of the UREL complex, plays a key role in ribosome recycling by promoting mono-ufmylation of RPL26/uL24 subunit of the 60S ribosome. Ufmylation of RPL26/uL24 occurs on free 60S ribosomes following ribosome dissociation: it weakens the junction between post-termination 60S subunits and SEC61 translocons, promoting release and recycling of the large ribosomal subunit from the endoplasmic reticulum membrane. Ufmylation of RPL26/uL24 and subsequent 60S ribosome recycling either take place after normal termination of translation or after ribosome stalling during cotranslational translocation at the endoplasmic reticulum. Within the UREL complex, CDK5RAP3 acts as a substrate adapter that constrains UFL1 ligase activity to mono-ufmylate RPL26/uL24 at 'Lys-134'. The UREL complex is also involved in reticulophagy in response to endoplasmic reticulum stress by promoting ufmylation of proteins such as CYB5R3, thereby promoting lysosomal degradation of ufmylated proteins. Also acts as a regulator of transcription: negatively regulates NF-kappa-B-mediated gene transcription through the control of RELA phosphorylation. Also regulates mitotic G2/M transition checkpoint and mitotic G2 DNA damage checkpoint. Through its interaction with CDKN2A/ARF and MDM2 may induce MDM2-dependent p53/TP53 ubiquitination, stabilization and activation in the nucleus, thereby promoting G1 cell cycle arrest and inhibition of cell proliferation. May also play a role in the rupture of the nuclear envelope during apoptosis. May regulate MAPK14 activity by regulating its dephosphorylation by PPM1D/WIP1. Required for liver development. (Microbial infection) May be negatively regulated by hepatitis B virus large envelope protein mutant pre-s2 to promote mitotic entry. This Homo sapiens (Human) protein is CDK5 regulatory subunit-associated protein 3.